A 422-amino-acid polypeptide reads, in one-letter code: UDP-N-acetylglucosamine 1-carboxyvinyltransferase (422 aa).

22-23 (KN) contributes to the phosphoenolpyruvate binding site. Arg-93 serves as a coordination point for UDP-N-acetyl-alpha-D-glucosamine. Residue Cys-117 is the Proton donor of the active site. Residue Cys-117 is modified to 2-(S-cysteinyl)pyruvic acid O-phosphothioketal. UDP-N-acetyl-alpha-D-glucosamine contacts are provided by residues 122 to 126 (RPVDL), Asp-308, and Leu-330.

It belongs to the EPSP synthase family. MurA subfamily.

Its subcellular location is the cytoplasm. It carries out the reaction phosphoenolpyruvate + UDP-N-acetyl-alpha-D-glucosamine = UDP-N-acetyl-3-O-(1-carboxyvinyl)-alpha-D-glucosamine + phosphate. Its pathway is cell wall biogenesis; peptidoglycan biosynthesis. In terms of biological role, cell wall formation. Adds enolpyruvyl to UDP-N-acetylglucosamine. The polypeptide is UDP-N-acetylglucosamine 1-carboxyvinyltransferase (Helicobacter pylori (strain J99 / ATCC 700824) (Campylobacter pylori J99)).